Here is a 141-residue protein sequence, read N- to C-terminus: Large ribosomal subunit protein uL11c (141 aa).

It belongs to the universal ribosomal protein uL11 family. As to quaternary structure, part of the ribosomal stalk of the 50S ribosomal subunit. Interacts with L10 and the large rRNA to form the base of the stalk. L10 forms an elongated spine to which L12 dimers bind in a sequential fashion forming a multimeric L10(L12)X complex.

The protein localises to the plastid. Its subcellular location is the chloroplast. Functionally, forms part of the ribosomal stalk which helps the ribosome interact with GTP-bound translation factors. The chain is Large ribosomal subunit protein uL11c from Cyanidium caldarium (Red alga).